Consider the following 652-residue polypeptide: DNA ligase (652 aa).

Residues 29 to 33 (DSEYD), 78 to 79 (SL), and glutamate 107 each bind NAD(+). Lysine 109 acts as the N6-AMP-lysine intermediate in catalysis. Residues arginine 130, glutamate 164, lysine 278, and lysine 302 each contribute to the NAD(+) site. Residues cysteine 395, cysteine 398, cysteine 413, and cysteine 418 each coordinate Zn(2+). Residues 577-652 (DQQAALFGLT…IEDEDWLLNL (76 aa)) enclose the BRCT domain.

The protein belongs to the NAD-dependent DNA ligase family. LigA subfamily. The cofactor is Mg(2+). Mn(2+) serves as cofactor.

The enzyme catalyses NAD(+) + (deoxyribonucleotide)n-3'-hydroxyl + 5'-phospho-(deoxyribonucleotide)m = (deoxyribonucleotide)n+m + AMP + beta-nicotinamide D-nucleotide.. DNA ligase that catalyzes the formation of phosphodiester linkages between 5'-phosphoryl and 3'-hydroxyl groups in double-stranded DNA using NAD as a coenzyme and as the energy source for the reaction. It is essential for DNA replication and repair of damaged DNA. The sequence is that of DNA ligase from Streptococcus equi subsp. equi (strain 4047).